The sequence spans 74 residues: Putative defensin-like protein 186 (74 aa).

An N-terminal signal peptide occupies residues 1–22 (MKNSSIILVLVFFFFISSSGEA). Disulfide bonds link Cys-25/Cys-74, Cys-31/Cys-51, Cys-37/Cys-68, and Cys-41/Cys-70.

It belongs to the DEFL family.

Its subcellular location is the secreted. This Arabidopsis thaliana (Mouse-ear cress) protein is Putative defensin-like protein 186 (LCR40).